The chain runs to 408 residues: Dual-specificity RNA methyltransferase RlmN (408 aa).

Residue E126 is the Proton acceptor of the active site. One can recognise a Radical SAM core domain in the interval E132–R373. C139 and C384 are joined by a disulfide. Positions 146, 150, and 153 each coordinate [4Fe-4S] cluster. S-adenosyl-L-methionine is bound by residues G210 to E211, S242, S264 to H266, and N341. C384 serves as the catalytic S-methylcysteine intermediate.

It belongs to the radical SAM superfamily. RlmN family. [4Fe-4S] cluster is required as a cofactor.

Its subcellular location is the cytoplasm. The enzyme catalyses adenosine(2503) in 23S rRNA + 2 reduced [2Fe-2S]-[ferredoxin] + 2 S-adenosyl-L-methionine = 2-methyladenosine(2503) in 23S rRNA + 5'-deoxyadenosine + L-methionine + 2 oxidized [2Fe-2S]-[ferredoxin] + S-adenosyl-L-homocysteine. The catalysed reaction is adenosine(37) in tRNA + 2 reduced [2Fe-2S]-[ferredoxin] + 2 S-adenosyl-L-methionine = 2-methyladenosine(37) in tRNA + 5'-deoxyadenosine + L-methionine + 2 oxidized [2Fe-2S]-[ferredoxin] + S-adenosyl-L-homocysteine. Functionally, specifically methylates position 2 of adenine 2503 in 23S rRNA and position 2 of adenine 37 in tRNAs. m2A2503 modification seems to play a crucial role in the proofreading step occurring at the peptidyl transferase center and thus would serve to optimize ribosomal fidelity. This is Dual-specificity RNA methyltransferase RlmN from Bartonella henselae (strain ATCC 49882 / DSM 28221 / CCUG 30454 / Houston 1) (Rochalimaea henselae).